The primary structure comprises 442 residues: tRNA-2-methylthio-N(6)-dimethylallyladenosine synthase (442 aa).

Positions 2–120 constitute an MTTase N-terminal domain; the sequence is KKVFIRTFGC…LPKMIVDKET (119 aa). [4Fe-4S] cluster-binding residues include C11, C49, C83, C157, C161, and C164. Residues 143 to 375 enclose the Radical SAM core domain; sequence RVEGGAAFVS…NEVIEAETAR (233 aa). The TRAM domain occupies 378–441; sequence QTMIGTVQRC…TFSLRGKVVE (64 aa).

It belongs to the methylthiotransferase family. MiaB subfamily. As to quaternary structure, monomer. Requires [4Fe-4S] cluster as cofactor.

The protein localises to the cytoplasm. The catalysed reaction is N(6)-dimethylallyladenosine(37) in tRNA + (sulfur carrier)-SH + AH2 + 2 S-adenosyl-L-methionine = 2-methylsulfanyl-N(6)-dimethylallyladenosine(37) in tRNA + (sulfur carrier)-H + 5'-deoxyadenosine + L-methionine + A + S-adenosyl-L-homocysteine + 2 H(+). Catalyzes the methylthiolation of N6-(dimethylallyl)adenosine (i(6)A), leading to the formation of 2-methylthio-N6-(dimethylallyl)adenosine (ms(2)i(6)A) at position 37 in tRNAs that read codons beginning with uridine. The protein is tRNA-2-methylthio-N(6)-dimethylallyladenosine synthase of Neisseria meningitidis serogroup C / serotype 2a (strain ATCC 700532 / DSM 15464 / FAM18).